The chain runs to 242 residues: Protein fmp-52, mitochondrial (242 aa).

The transit peptide at M1–V87 directs the protein to the mitochondrion. Residues S33–N58 are disordered. A compositionally biased stretch (polar residues) spans Q35–N58.

Belongs to the FMP52 family.

Its subcellular location is the mitochondrion outer membrane. The sequence is that of Protein fmp-52, mitochondrial (fmp-52) from Neurospora crassa (strain ATCC 24698 / 74-OR23-1A / CBS 708.71 / DSM 1257 / FGSC 987).